The following is a 112-amino-acid chain: Nitrogenase-stabilizing/protective protein NifW (112 aa).

This sequence belongs to the NifW family. As to quaternary structure, homotrimer; associates with NifD.

In terms of biological role, may protect the nitrogenase Fe-Mo protein from oxidative damage. The chain is Nitrogenase-stabilizing/protective protein NifW from Paraburkholderia xenovorans (strain LB400).